A 212-amino-acid polypeptide reads, in one-letter code: Placenta-specific protein 1 (212 aa).

Positions 1-22 (MKVFKFIGLMILLTSAFSAGSG) are cleaved as a signal peptide.

The protein belongs to the PLAC1 family. In terms of tissue distribution, expressed in placenta. Localizes primarily to differentiated syncytiotrophoblast throughout gestation as well as to a small population of villous cytotrophoblasts. Also detected in maternal blood and rapidly disappears following delivery, but is not detected in other adult or fetal tissues examined.

Its subcellular location is the secreted. In terms of biological role, may play a role in placental development. The protein is Placenta-specific protein 1 of Homo sapiens (Human).